The primary structure comprises 554 residues: Glucose-6-phosphate isomerase (554 aa).

The active-site Proton donor is glutamate 359. Active-site residues include histidine 390 and lysine 518.

Belongs to the GPI family.

The protein resides in the cytoplasm. The catalysed reaction is alpha-D-glucose 6-phosphate = beta-D-fructose 6-phosphate. The protein operates within carbohydrate biosynthesis; gluconeogenesis. It participates in carbohydrate degradation; glycolysis; D-glyceraldehyde 3-phosphate and glycerone phosphate from D-glucose: step 2/4. In terms of biological role, catalyzes the reversible isomerization of glucose-6-phosphate to fructose-6-phosphate. In Pseudomonas fluorescens (strain Pf0-1), this protein is Glucose-6-phosphate isomerase.